The following is a 390-amino-acid chain: Protein YghO (390 aa).

The chain is Protein YghO (yghO) from Escherichia coli (strain K12).